The primary structure comprises 748 residues: Cysteine--tRNA ligase, cytoplasmic (748 aa).

The disordered stretch occupies residues 1 to 25 (MAAAPAEQGKGKRVQPPWSPPEGTK). Position 55 (Cys-55) interacts with Zn(2+). L-cysteine is bound at residue Gly-56. Residues 57-67 (PTVYDASHMGH) carry the 'HIGH' region motif. Residue Thr-96 participates in L-cysteine binding. Positions 101 to 104 (KIIK) match the 'KIIK' region motif. 3 residues coordinate Zn(2+): Cys-348, His-373, and Glu-377. Position 373 (His-373) interacts with L-cysteine. A 'KMSKS' region motif is present at residues 406–410 (KMSKS). Lys-409 serves as a coordination point for ATP. 2 stretches are compositionally biased toward basic and acidic residues: residues 656-679 (KIEE…EAAK) and 686-717 (PPHE…KELS). A disordered region spans residues 656 to 719 (KIEEEKKRKK…DTEGKELSKG (64 aa)).

This sequence belongs to the class-I aminoacyl-tRNA synthetase family. As to quaternary structure, homodimer. The cofactor is Zn(2+).

The protein resides in the cytoplasm. The enzyme catalyses tRNA(Cys) + L-cysteine + ATP = L-cysteinyl-tRNA(Cys) + AMP + diphosphate. Catalyzes the ATP-dependent ligation of cysteine to tRNA(Cys). In Gallus gallus (Chicken), this protein is Cysteine--tRNA ligase, cytoplasmic (CARS1).